The primary structure comprises 151 residues: Myosin light polypeptide 6 (151 aa).

C2 is modified (N-acetylcysteine). EF-hand domains are found at residues 7 to 42 (EQTA…LGQN), 84 to 119 (GCFE…LGEK), and 119 to 151 (KMTE…VLSG).

As to quaternary structure, myosin is a hexamer of 2 heavy chains and 4 light chains.

In terms of biological role, regulatory light chain of myosin. Does not bind calcium. The sequence is that of Myosin light polypeptide 6 (MYL6) from Gallus gallus (Chicken).